The following is a 75-amino-acid chain: uncharacterized protein (75 aa).

Residues 29–72 (EVYHVESGDTLWTIAKSFEIPVQQLMNLNKLSSDRIYPGQIIKI) form the LysM domain.

This is an uncharacterized protein from Bacillus subtilis (strain 168).